We begin with the raw amino-acid sequence, 385 residues long: Putative transport protein MT1133 (385 aa).

The next 8 helical transmembrane spans lie at 7–27, 32–52, 66–86, 159–179, 218–238, 241–261, 263–283, and 319–339; these read LTQK…GAYF, FVLI…FKWF, LLSA…LAIV, SLAG…ALLV, FVIA…AGFH, FFIF…GGIV, IPFG…FVLL, and GITM…ILIV.

This sequence belongs to the autoinducer-2 exporter (AI-2E) (TC 2.A.86) family.

Its subcellular location is the cell membrane. The polypeptide is Putative transport protein MT1133 (Mycobacterium tuberculosis (strain CDC 1551 / Oshkosh)).